The primary structure comprises 194 residues: Imidazole glycerol phosphate synthase subunit HisH (194 aa).

One can recognise a Glutamine amidotransferase type-1 domain in the interval 3 to 194 (RIAIVDLGIG…LILLRNFRRL (192 aa)). Cys-74 serves as the catalytic Nucleophile. Active-site residues include His-176 and Glu-178.

Heterodimer of HisH and HisF.

The protein localises to the cytoplasm. The catalysed reaction is 5-[(5-phospho-1-deoxy-D-ribulos-1-ylimino)methylamino]-1-(5-phospho-beta-D-ribosyl)imidazole-4-carboxamide + L-glutamine = D-erythro-1-(imidazol-4-yl)glycerol 3-phosphate + 5-amino-1-(5-phospho-beta-D-ribosyl)imidazole-4-carboxamide + L-glutamate + H(+). It carries out the reaction L-glutamine + H2O = L-glutamate + NH4(+). It participates in amino-acid biosynthesis; L-histidine biosynthesis; L-histidine from 5-phospho-alpha-D-ribose 1-diphosphate: step 5/9. IGPS catalyzes the conversion of PRFAR and glutamine to IGP, AICAR and glutamate. The HisH subunit catalyzes the hydrolysis of glutamine to glutamate and ammonia as part of the synthesis of IGP and AICAR. The resulting ammonia molecule is channeled to the active site of HisF. This is Imidazole glycerol phosphate synthase subunit HisH from Pyrococcus furiosus (strain ATCC 43587 / DSM 3638 / JCM 8422 / Vc1).